The chain runs to 518 residues: Serine--tRNA ligase, mitochondrial (518 aa).

Residues 1–34 (MAASIVRRLGPLVAGRGLRLRGGCVCNQSFKRSF) constitute a mitochondrion transit peptide. Lys110 is modified (N6-acetyllysine). Lys195 bears the N6-succinyllysine mark. 299–301 (TAE) serves as a coordination point for L-serine. Residue 330–332 (RAE) coordinates ATP. Lys337 carries the post-translational modification N6-succinyllysine. ATP is bound at residue Val345. Glu352 serves as a coordination point for L-serine. Position 418 to 421 (418 to 421 (EVTS)) interacts with ATP. Residue Thr453 coordinates L-serine. Residues 497–518 (PLQYIGPNQPQKPRLPGQPASS) are disordered.

This sequence belongs to the class-II aminoacyl-tRNA synthetase family. Type-1 seryl-tRNA synthetase subfamily. Homodimer. The tRNA molecule probably binds across the dimer. Two N-termini starting at positions 35 and 37 have been identified by direct sequencing.

Its subcellular location is the mitochondrion matrix. The enzyme catalyses tRNA(Ser) + L-serine + ATP = L-seryl-tRNA(Ser) + AMP + diphosphate + H(+). It catalyses the reaction tRNA(Sec) + L-serine + ATP = L-seryl-tRNA(Sec) + AMP + diphosphate + H(+). Its pathway is aminoacyl-tRNA biosynthesis; selenocysteinyl-tRNA(Sec) biosynthesis; L-seryl-tRNA(Sec) from L-serine and tRNA(Sec): step 1/1. Functionally, catalyzes the attachment of serine to tRNA(Ser). Is also probably able to aminoacylate tRNA(Sec) with serine, to form the misacylated tRNA L-seryl-tRNA(Sec), which will be further converted into selenocysteinyl-tRNA(Sec). The protein is Serine--tRNA ligase, mitochondrial (SARS2) of Bos taurus (Bovine).